A 501-amino-acid polypeptide reads, in one-letter code: Isoflavone 3'-hydroxylase (501 aa).

A helical transmembrane segment spans residues 7-24; that stretch reads LLSLSFIITIKILLKITS. Position 439 (Cys-439) interacts with heme.

It belongs to the cytochrome P450 family. Heme is required as a cofactor. Expressed constitutively in leaves and stems, but not in roots.

Its subcellular location is the endoplasmic reticulum membrane. The catalysed reaction is formononetin + reduced [NADPH--hemoprotein reductase] + O2 = calycosin + oxidized [NADPH--hemoprotein reductase] + H2O + H(+). In terms of biological role, involved in the biosynthesis of the pterocarpin phytoalexins. Acts on isoflavones with a 4'-methoxy group on the B-ring, such as biochanin A, formononetin and 2'-hydroxyformononetin. Has a low activity with daidzein and pseudobaptigenin, and no activity with the 7-O-methylated isoflavonoids isoformononetin and prunetin. In Medicago truncatula (Barrel medic), this protein is Isoflavone 3'-hydroxylase.